Reading from the N-terminus, the 383-residue chain is Outer membrane protein S2 (383 aa).

The first 21 residues, 1–21, serve as a signal peptide directing secretion; that stretch reads MKRKVLALVIPALLAAGAAHA.

This sequence belongs to the Gram-negative porin family. In terms of assembly, homotrimer.

The protein localises to the cell outer membrane. Its function is as follows. Forms pores that allow passive diffusion of small molecules across the outer membrane. The protein is Outer membrane protein S2 (ompS2) of Salmonella typhi.